A 223-amino-acid polypeptide reads, in one-letter code: Holliday junction branch migration complex subunit RuvA (223 aa).

The segment at 1-67 (MIGWLKGEKI…EDGSNLFGFI (67 aa)) is domain I. Residues 68–146 (EKSERDLFRK…DFDLNNEFSP (79 aa)) are domain II. The flexible linker stretch occupies residues 147 to 157 (PTKLRPESAED). Positions 158–223 (LNEELLTEIK…FKQALITLNK (66 aa)) are domain III.

Belongs to the RuvA family. In terms of assembly, homotetramer. Forms an RuvA(8)-RuvB(12)-Holliday junction (HJ) complex. HJ DNA is sandwiched between 2 RuvA tetramers; dsDNA enters through RuvA and exits via RuvB. An RuvB hexamer assembles on each DNA strand where it exits the tetramer. Each RuvB hexamer is contacted by two RuvA subunits (via domain III) on 2 adjacent RuvB subunits; this complex drives branch migration. In the full resolvosome a probable DNA-RuvA(4)-RuvB(12)-RuvC(2) complex forms which resolves the HJ.

It localises to the cytoplasm. Its function is as follows. The RuvA-RuvB-RuvC complex processes Holliday junction (HJ) DNA during genetic recombination and DNA repair, while the RuvA-RuvB complex plays an important role in the rescue of blocked DNA replication forks via replication fork reversal (RFR). RuvA specifically binds to HJ cruciform DNA, conferring on it an open structure. The RuvB hexamer acts as an ATP-dependent pump, pulling dsDNA into and through the RuvAB complex. HJ branch migration allows RuvC to scan DNA until it finds its consensus sequence, where it cleaves and resolves the cruciform DNA. The protein is Holliday junction branch migration complex subunit RuvA of Prochlorococcus marinus (strain MIT 9211).